We begin with the raw amino-acid sequence, 705 residues long: 1,4-alpha-glucan branching enzyme GlgB (705 aa).

Aspartate 309 (nucleophile) is an active-site residue. Glutamate 360 functions as the Proton donor in the catalytic mechanism. The disordered stretch occupies residues 654-705 (VQVERAADPRPNEQQRLVAETPAHEGGRSAPADAAESAEQKPDDEQKGGKKA). The segment covering 691–705 (AEQKPDDEQKGGKKA) has biased composition (basic and acidic residues).

Belongs to the glycosyl hydrolase 13 family. GlgB subfamily. As to quaternary structure, monomer.

The enzyme catalyses Transfers a segment of a (1-&gt;4)-alpha-D-glucan chain to a primary hydroxy group in a similar glucan chain.. It participates in glycan biosynthesis; glycogen biosynthesis. Catalyzes the formation of the alpha-1,6-glucosidic linkages in glycogen by scission of a 1,4-alpha-linked oligosaccharide from growing alpha-1,4-glucan chains and the subsequent attachment of the oligosaccharide to the alpha-1,6 position. This chain is 1,4-alpha-glucan branching enzyme GlgB, found in Deinococcus radiodurans (strain ATCC 13939 / DSM 20539 / JCM 16871 / CCUG 27074 / LMG 4051 / NBRC 15346 / NCIMB 9279 / VKM B-1422 / R1).